The following is a 308-amino-acid chain: Pantothenate kinase (308 aa).

ATP is bound at residue 93 to 100 (GSVAVGKS).

It belongs to the prokaryotic pantothenate kinase family.

Its subcellular location is the cytoplasm. The enzyme catalyses (R)-pantothenate + ATP = (R)-4'-phosphopantothenate + ADP + H(+). The protein operates within cofactor biosynthesis; coenzyme A biosynthesis; CoA from (R)-pantothenate: step 1/5. The polypeptide is Pantothenate kinase (Corynebacterium diphtheriae (strain ATCC 700971 / NCTC 13129 / Biotype gravis)).